The sequence spans 632 residues: 1-deoxy-D-xylulose-5-phosphate synthase (632 aa).

Thiamine diphosphate contacts are provided by residues histidine 77 and 118 to 120; that span reads GHA. A Mg(2+)-binding site is contributed by aspartate 149. Thiamine diphosphate is bound by residues 150 to 151, asparagine 178, phenylalanine 287, and glutamate 372; that span reads GS. Mg(2+) is bound at residue asparagine 178.

The protein belongs to the transketolase family. DXPS subfamily. As to quaternary structure, homodimer. The cofactor is Mg(2+). It depends on thiamine diphosphate as a cofactor.

It catalyses the reaction D-glyceraldehyde 3-phosphate + pyruvate + H(+) = 1-deoxy-D-xylulose 5-phosphate + CO2. It participates in metabolic intermediate biosynthesis; 1-deoxy-D-xylulose 5-phosphate biosynthesis; 1-deoxy-D-xylulose 5-phosphate from D-glyceraldehyde 3-phosphate and pyruvate: step 1/1. Its function is as follows. Catalyzes the acyloin condensation reaction between C atoms 2 and 3 of pyruvate and glyceraldehyde 3-phosphate to yield 1-deoxy-D-xylulose-5-phosphate (DXP). This Chlorobium luteolum (strain DSM 273 / BCRC 81028 / 2530) (Pelodictyon luteolum) protein is 1-deoxy-D-xylulose-5-phosphate synthase.